We begin with the raw amino-acid sequence, 333 residues long: Ornithine carbamoyltransferase (333 aa).

Carbamoyl phosphate is bound by residues serine 57–threonine 60, arginine 108, and histidine 135–glutamine 138. L-ornithine is bound by residues asparagine 168, aspartate 232, and serine 236–methionine 237. Carbamoyl phosphate contacts are provided by residues cysteine 274–leucine 275 and arginine 319.

Belongs to the aspartate/ornithine carbamoyltransferase superfamily. OTCase family.

It localises to the cytoplasm. It carries out the reaction carbamoyl phosphate + L-ornithine = L-citrulline + phosphate + H(+). It functions in the pathway amino-acid degradation; L-arginine degradation via ADI pathway; carbamoyl phosphate from L-arginine: step 2/2. Reversibly catalyzes the transfer of the carbamoyl group from carbamoyl phosphate (CP) to the N(epsilon) atom of ornithine (ORN) to produce L-citrulline. The sequence is that of Ornithine carbamoyltransferase from Pediococcus pentosaceus (strain ATCC 25745 / CCUG 21536 / LMG 10740 / 183-1w).